Here is a 167-residue protein sequence, read N- to C-terminus: UPF0114 protein in repA1-repA2 intergenic region (167 aa).

Transmembrane regions (helical) follow at residues 15-35 (LMFP…LKFF), 53-73 (LVLA…LVMV), and 136-156 (IMLC…MAYI).

It belongs to the UPF0114 family.

The protein resides in the cell membrane. This is UPF0114 protein in repA1-repA2 intergenic region from Buchnera aphidicola subsp. Schizaphis graminum (strain Sg).